The primary structure comprises 375 residues: Putative monooxygenase Rv1533 (375 aa).

FMN is bound by residues Q190, G195, G224, and 243 to 246 (WCGS).

Belongs to the nitronate monooxygenase family. Requires FMN as cofactor.

The sequence is that of Putative monooxygenase Rv1533 from Mycobacterium tuberculosis (strain ATCC 25618 / H37Rv).